A 407-amino-acid polypeptide reads, in one-letter code: Cation efflux system protein CusB (407 aa).

A signal peptide spans 1–28 (MKKIALIIGSMIAGGIISAAGFTWFAKA).

This sequence belongs to the membrane fusion protein (MFP) (TC 8.A.1) family. The cus efflux system is composed of CusA, CusB, CusC and CusF.

Part of a cation efflux system that mediates resistance to copper and silver. This chain is Cation efflux system protein CusB (cusB), found in Escherichia coli O157:H7.